A 71-amino-acid chain; its full sequence is DNA-directed RNA polymerase subunit epsilon (71 aa).

This sequence belongs to the RNA polymerase subunit epsilon family. In terms of assembly, RNAP is composed of a core of 2 alpha, a beta and a beta' subunit. The core is associated with a delta subunit, and at least one of epsilon or omega. When a sigma factor is associated with the core the holoenzyme is formed, which can initiate transcription.

It carries out the reaction RNA(n) + a ribonucleoside 5'-triphosphate = RNA(n+1) + diphosphate. Functionally, a non-essential component of RNA polymerase (RNAP). This is DNA-directed RNA polymerase subunit epsilon from Staphylococcus saprophyticus subsp. saprophyticus (strain ATCC 15305 / DSM 20229 / NCIMB 8711 / NCTC 7292 / S-41).